Reading from the N-terminus, the 317-residue chain is Ribosomal protein L11 methyltransferase (317 aa).

S-adenosyl-L-methionine contacts are provided by threonine 158, glycine 179, aspartate 201, and asparagine 244.

Belongs to the methyltransferase superfamily. PrmA family.

It is found in the cytoplasm. It carries out the reaction L-lysyl-[protein] + 3 S-adenosyl-L-methionine = N(6),N(6),N(6)-trimethyl-L-lysyl-[protein] + 3 S-adenosyl-L-homocysteine + 3 H(+). Methylates ribosomal protein L11. This Streptococcus pyogenes serotype M18 (strain MGAS8232) protein is Ribosomal protein L11 methyltransferase.